Consider the following 260-residue polypeptide: uncharacterized protein (260 aa).

This is an uncharacterized protein from Caenorhabditis elegans.